The sequence spans 530 residues: Chitin synthase 1 (530 aa).

Asparagine 17 is a glycosylation site (N-linked (GlcNAc...) asparagine). The interval 22 to 94 (QESSSNLIQQ…QANNNRKVTR (73 aa)) is disordered. The span at 24 to 56 (SSSNLIQQQQPGTNYARNQQTLSSLRSQKQQAE) shows a compositional bias: polar residues. 3 N-linked (GlcNAc...) asparagine glycosylation sites follow: asparagine 118, asparagine 310, and asparagine 474. 2 helical membrane passes run 477–497 (FFAG…GHGF) and 508–528 (IYNV…LSFL).

This sequence belongs to the chitin synthase family. Class II subfamily.

Its subcellular location is the cell membrane. It catalyses the reaction [(1-&gt;4)-N-acetyl-beta-D-glucosaminyl](n) + UDP-N-acetyl-alpha-D-glucosamine = [(1-&gt;4)-N-acetyl-beta-D-glucosaminyl](n+1) + UDP + H(+). Functionally, polymerizes chitin, a structural polymer of the cell wall and septum, by transferring the sugar moiety of UDP-GlcNAc to the non-reducing end of the growing chitin polymer. This is Chitin synthase 1 from Rhizopus delemar (strain RA 99-880 / ATCC MYA-4621 / FGSC 9543 / NRRL 43880) (Mucormycosis agent).